Here is a 201-residue protein sequence, read N- to C-terminus: Putative manganese efflux pump MntP (201 aa).

Helical transmembrane passes span 3–23 (LVSIILISIGLSMDAFAVSIT), 39–59 (IGLFFGGFQALMPLIGWSIGI), 65–85 (IAALDHWIALILLSIIGGKMI), 116–136 (LTLLAIATSIDALAIGVSFAF), 141–161 (IINTIIIIGSITFVICFIGVM), and 176–196 (ILGGIVLIFIGIKIFIEHTNI).

The protein belongs to the MntP (TC 9.B.29) family.

It localises to the cell membrane. Its function is as follows. Probably functions as a manganese efflux pump. The protein is Putative manganese efflux pump MntP of Clostridium botulinum (strain Loch Maree / Type A3).